Here is a 156-residue protein sequence, read N- to C-terminus: MSSNKINKKSIARIAAIQAIYQHMLRNNDNIDDIIENVLSFYRNDTSMTDSPIKISLTISHFKMLVKLVFENIDKIDEIISNHLVNDKNQNHIPILLQALLRSGICELLFFPDIPTKVIINEYTDIANDMLNDHEIGFVNSILDKIAHENKRFYDK.

It belongs to the NusB family.

Its function is as follows. Involved in transcription antitermination. Required for transcription of ribosomal RNA (rRNA) genes. Binds specifically to the boxA antiterminator sequence of the ribosomal RNA (rrn) operons. In Rickettsia bellii (strain OSU 85-389), this protein is Transcription antitermination protein NusB.